Consider the following 331-residue polypeptide: 4-hydroxy-3-methylbut-2-enyl diphosphate reductase (331 aa).

Cys-12 is a [4Fe-4S] cluster binding site. The (2E)-4-hydroxy-3-methylbut-2-enyl diphosphate site is built by His-43 and His-81. Residues His-43 and His-81 each contribute to the dimethylallyl diphosphate site. Isopentenyl diphosphate contacts are provided by His-43 and His-81. Cys-103 is a [4Fe-4S] cluster binding site. His-131 is a (2E)-4-hydroxy-3-methylbut-2-enyl diphosphate binding site. Position 131 (His-131) interacts with dimethylallyl diphosphate. His-131 contributes to the isopentenyl diphosphate binding site. The Proton donor role is filled by Glu-133. Thr-170 contacts (2E)-4-hydroxy-3-methylbut-2-enyl diphosphate. Cys-198 lines the [4Fe-4S] cluster pocket. Residues Ser-226, Asn-228, and Ser-271 each contribute to the (2E)-4-hydroxy-3-methylbut-2-enyl diphosphate site. The dimethylallyl diphosphate site is built by Ser-226, Asn-228, and Ser-271. Isopentenyl diphosphate is bound by residues Ser-226, Asn-228, and Ser-271.

It belongs to the IspH family. [4Fe-4S] cluster serves as cofactor.

It catalyses the reaction isopentenyl diphosphate + 2 oxidized [2Fe-2S]-[ferredoxin] + H2O = (2E)-4-hydroxy-3-methylbut-2-enyl diphosphate + 2 reduced [2Fe-2S]-[ferredoxin] + 2 H(+). The enzyme catalyses dimethylallyl diphosphate + 2 oxidized [2Fe-2S]-[ferredoxin] + H2O = (2E)-4-hydroxy-3-methylbut-2-enyl diphosphate + 2 reduced [2Fe-2S]-[ferredoxin] + 2 H(+). Its pathway is isoprenoid biosynthesis; dimethylallyl diphosphate biosynthesis; dimethylallyl diphosphate from (2E)-4-hydroxy-3-methylbutenyl diphosphate: step 1/1. It functions in the pathway isoprenoid biosynthesis; isopentenyl diphosphate biosynthesis via DXP pathway; isopentenyl diphosphate from 1-deoxy-D-xylulose 5-phosphate: step 6/6. In terms of biological role, catalyzes the conversion of 1-hydroxy-2-methyl-2-(E)-butenyl 4-diphosphate (HMBPP) into a mixture of isopentenyl diphosphate (IPP) and dimethylallyl diphosphate (DMAPP). Acts in the terminal step of the DOXP/MEP pathway for isoprenoid precursor biosynthesis. The protein is 4-hydroxy-3-methylbut-2-enyl diphosphate reductase of Listeria monocytogenes serotype 4b (strain CLIP80459).